A 571-amino-acid polypeptide reads, in one-letter code: Proline--tRNA ligase (571 aa).

It belongs to the class-II aminoacyl-tRNA synthetase family. ProS type 1 subfamily. In terms of assembly, homodimer.

The protein localises to the cytoplasm. It catalyses the reaction tRNA(Pro) + L-proline + ATP = L-prolyl-tRNA(Pro) + AMP + diphosphate. Functionally, catalyzes the attachment of proline to tRNA(Pro) in a two-step reaction: proline is first activated by ATP to form Pro-AMP and then transferred to the acceptor end of tRNA(Pro). As ProRS can inadvertently accommodate and process non-cognate amino acids such as alanine and cysteine, to avoid such errors it has two additional distinct editing activities against alanine. One activity is designated as 'pretransfer' editing and involves the tRNA(Pro)-independent hydrolysis of activated Ala-AMP. The other activity is designated 'posttransfer' editing and involves deacylation of mischarged Ala-tRNA(Pro). The misacylated Cys-tRNA(Pro) is not edited by ProRS. This Shewanella sp. (strain W3-18-1) protein is Proline--tRNA ligase.